The sequence spans 416 residues: Phosphoglycerate kinase (416 aa).

V23, D24, F25, N26, Q39, R40, S63, H64, G66, R67, L122, R123, H170, and R171 together coordinate (2R)-3-phosphoglycerate. Position 214 (G214) interacts with ADP. G214 contributes to the CDP binding site. The AMP site is built by A215 and K216. Residue A215 participates in ATP binding. A215 contributes to the Mg(2+) binding site. D219 contacts CDP. A Mg(2+)-binding site is contributed by D219. K220 is an AMP binding site. Residue K220 participates in ATP binding. G238 contributes to the ADP binding site. G238 contacts CDP. 2 residues coordinate AMP: G239 and G312. ATP contacts are provided by G239 and G312. CDP is bound by residues G337, A339, and F342. F342 is an ADP binding site. An AMP-binding site is contributed by E343. Positions 343, 374, and 375 each coordinate ATP. D374 provides a ligand contact to Mg(2+).

This sequence belongs to the phosphoglycerate kinase family. As to quaternary structure, monomer. The cofactor is Mg(2+).

It is found in the cytoplasm. Its subcellular location is the mitochondrion. It carries out the reaction (2R)-3-phosphoglycerate + ATP = (2R)-3-phospho-glyceroyl phosphate + ADP. It functions in the pathway carbohydrate degradation; glycolysis; pyruvate from D-glyceraldehyde 3-phosphate: step 2/5. Its function is as follows. Catalyzes one of the two ATP producing reactions in the glycolytic pathway via the reversible conversion of 1,3-diphosphoglycerate to 3-phosphoglycerate. Both L- and D- forms of purine and pyrimidine nucleotides can be used as substrates, but the activity is much lower on pyrimidines. Negatively regulates the biosynthesis of acetyl-CoA from pyruvate in the mitochondrion. The sequence is that of Phosphoglycerate kinase (pgk1) from Hypocrea jecorina (Trichoderma reesei).